We begin with the raw amino-acid sequence, 221 residues long: Lipoprotein-releasing system ATP-binding protein LolD (221 aa).

Residues 6 to 220 (LTLKNVSKHY…YKLKHGALNM (215 aa)) enclose the ABC transporter domain. ATP is bound at residue 42–49 (GSSGSGKS).

Belongs to the ABC transporter superfamily. Lipoprotein translocase (TC 3.A.1.125) family. As to quaternary structure, the complex is composed of two ATP-binding proteins (LolD) and two transmembrane proteins (LolC and LolE).

It localises to the cell inner membrane. Part of the ABC transporter complex LolCDE involved in the translocation of mature outer membrane-directed lipoproteins, from the inner membrane to the periplasmic chaperone, LolA. Responsible for the formation of the LolA-lipoprotein complex in an ATP-dependent manner. This is Lipoprotein-releasing system ATP-binding protein LolD from Rickettsia bellii (strain RML369-C).